The primary structure comprises 573 residues: Sulfite reductase [NADPH] hemoprotein beta-component (573 aa).

[4Fe-4S] cluster is bound by residues C438, C444, C483, and C487. A siroheme-binding site is contributed by C487.

It belongs to the nitrite and sulfite reductase 4Fe-4S domain family. In terms of assembly, alpha(8)-beta(8). The alpha component is a flavoprotein, the beta component is a hemoprotein. Requires siroheme as cofactor. The cofactor is [4Fe-4S] cluster.

The enzyme catalyses hydrogen sulfide + 3 NADP(+) + 3 H2O = sulfite + 3 NADPH + 4 H(+). The protein operates within sulfur metabolism; hydrogen sulfide biosynthesis; hydrogen sulfide from sulfite (NADPH route): step 1/1. Its function is as follows. Component of the sulfite reductase complex that catalyzes the 6-electron reduction of sulfite to sulfide. This is one of several activities required for the biosynthesis of L-cysteine from sulfate. In Staphylococcus haemolyticus (strain JCSC1435), this protein is Sulfite reductase [NADPH] hemoprotein beta-component.